The primary structure comprises 330 residues: Sulfate/thiosulfate import ATP-binding protein CysA (330 aa).

The 235-residue stretch at 3-237 (IEIRNINKQF…PASEFVYHFL (235 aa)) folds into the ABC transporter domain. 35–42 (GPSGCGKT) provides a ligand contact to ATP.

Belongs to the ABC transporter superfamily. Sulfate/tungstate importer (TC 3.A.1.6) family. The complex is composed of two ATP-binding proteins (CysA), two transmembrane proteins (CysT and CysW) and a solute-binding protein (CysP).

The protein localises to the cell inner membrane. It carries out the reaction sulfate(out) + ATP + H2O = sulfate(in) + ADP + phosphate + H(+). The enzyme catalyses thiosulfate(out) + ATP + H2O = thiosulfate(in) + ADP + phosphate + H(+). Part of the ABC transporter complex CysAWTP involved in sulfate/thiosulfate import. Responsible for energy coupling to the transport system. The polypeptide is Sulfate/thiosulfate import ATP-binding protein CysA (Pectobacterium atrosepticum (strain SCRI 1043 / ATCC BAA-672) (Erwinia carotovora subsp. atroseptica)).